We begin with the raw amino-acid sequence, 722 residues long: Ribosomal RNA large subunit methyltransferase K/L (722 aa).

Residues 55–167 (TGYRACLWSR…GNEGTLYLDL (113 aa)) enclose the THUMP domain.

Belongs to the methyltransferase superfamily. RlmKL family.

The protein localises to the cytoplasm. It carries out the reaction guanosine(2445) in 23S rRNA + S-adenosyl-L-methionine = N(2)-methylguanosine(2445) in 23S rRNA + S-adenosyl-L-homocysteine + H(+). The enzyme catalyses guanosine(2069) in 23S rRNA + S-adenosyl-L-methionine = N(2)-methylguanosine(2069) in 23S rRNA + S-adenosyl-L-homocysteine + H(+). Functionally, specifically methylates the guanine in position 2445 (m2G2445) and the guanine in position 2069 (m7G2069) of 23S rRNA. The chain is Ribosomal RNA large subunit methyltransferase K/L from Desulfotalea psychrophila (strain LSv54 / DSM 12343).